Here is a 97-residue protein sequence, read N- to C-terminus: Ataxin-7-like protein 3B (97 aa).

Positions 76–97 (SLPGDPGDGPQTELQRSPPEFQ) are disordered. Ser92 carries the phosphoserine modification.

The protein belongs to the SGF11 family. In terms of assembly, interacts strongly with ENY2. Interacts weakly with USP22.

It is found in the cytoplasm. By binding to ENY2, interferes with the nuclear functions of the deubiquitinase (DUB) module of the SAGA complex which consists of ENY2, ATXN7, ATXN7L3 and the histone deubiquitinating component USP22. Affects USP22 DUB activity toward histones indirectly by changing the subcellular distribution of ENY2 and altering ENY2 availability for ATXN7L3 interaction. Regulates H2B monoubiquitination (H2Bub1) levels through cytoplasmic sequestration of ENY2 resulting in loss of nuclear ENY2-ATXN7L3 association which destabilizes ATXN7L3. Affects protein expression levels of ENY2 and ATXN7L3. This chain is Ataxin-7-like protein 3B (Atxn7l3b), found in Mus musculus (Mouse).